Reading from the N-terminus, the 31-residue chain is Cytochrome b6-f complex subunit 6 (31 aa).

A helical membrane pass occupies residues 3–23 (LIIGYIILLACAFGLAAGLYF).

It belongs to the PetL family. The 4 large subunits of the cytochrome b6-f complex are cytochrome b6, subunit IV (17 kDa polypeptide, PetD), cytochrome f and the Rieske protein, while the 4 small subunits are PetG, PetL, PetM and PetN. The complex functions as a dimer.

It is found in the plastid. The protein resides in the chloroplast thylakoid membrane. Its function is as follows. Component of the cytochrome b6-f complex, which mediates electron transfer between photosystem II (PSII) and photosystem I (PSI), cyclic electron flow around PSI, and state transitions. PetL is important for photoautotrophic growth as well as for electron transfer efficiency and stability of the cytochrome b6-f complex. The sequence is that of Cytochrome b6-f complex subunit 6 from Guillardia theta (Cryptophyte).